Reading from the N-terminus, the 286-residue chain is Polyamine aminopropyltransferase (286 aa).

Positions 5-238 constitute a PABS domain; that stretch reads TMWHETLHDQ…GIMTFAWATD (234 aa). Gln-33 provides a ligand contact to S-methyl-5'-thioadenosine. Positions 64 and 88 each coordinate spermidine. S-methyl-5'-thioadenosine-binding positions include Glu-108 and 140–141; that span reads DG. Asp-158 serves as the catalytic Proton acceptor. 158–161 lines the spermidine pocket; it reads DCTD. Pro-165 provides a ligand contact to S-methyl-5'-thioadenosine.

Belongs to the spermidine/spermine synthase family. In terms of assembly, homodimer or homotetramer.

The protein resides in the cytoplasm. The enzyme catalyses S-adenosyl 3-(methylsulfanyl)propylamine + putrescine = S-methyl-5'-thioadenosine + spermidine + H(+). The protein operates within amine and polyamine biosynthesis; spermidine biosynthesis; spermidine from putrescine: step 1/1. In terms of biological role, catalyzes the irreversible transfer of a propylamine group from the amino donor S-adenosylmethioninamine (decarboxy-AdoMet) to putrescine (1,4-diaminobutane) to yield spermidine. This chain is Polyamine aminopropyltransferase, found in Salmonella typhi.